Consider the following 225-residue polypeptide: Endonuclease V (225 aa).

Mg(2+)-binding residues include Asp-43 and Asp-110.

This sequence belongs to the endonuclease V family. The cofactor is Mg(2+).

Its subcellular location is the cytoplasm. It catalyses the reaction Endonucleolytic cleavage at apurinic or apyrimidinic sites to products with a 5'-phosphate.. In terms of biological role, DNA repair enzyme involved in the repair of deaminated bases. Selectively cleaves double-stranded DNA at the second phosphodiester bond 3' to a deoxyinosine leaving behind the intact lesion on the nicked DNA. The chain is Endonuclease V from Thermotoga neapolitana (strain ATCC 49049 / DSM 4359 / NBRC 107923 / NS-E).